The primary structure comprises 35 residues: Thrombin-like enzyme cerastobin (35 aa).

Residues 1–35 enclose the Peptidase S1 domain; sequence VIGGAKCNINEHRSIVLLYSSRLFGHTLINKEWVL.

Belongs to the peptidase S1 family. Snake venom subfamily. As to quaternary structure, monomer. Expressed by the venom gland.

Its subcellular location is the secreted. Inhibited by diisopropylfluorophosphate (DFP). Functionally, thrombin-like snake venom serine protease, that cleaves both alpha-chain (FGA) and beta-chain (FGB) of fibrinogen. Partially degrades factor X (F10), and release bradykinin from kininogen (KNG). Potently induces platelet aggregation. Shows a proteolytic activity towards protein constituents of the platelets cytoskeleton. Hydrolyzes actin, actin-binding protein, and P235. Shows a preferential cleavage at Arg-|-Xaa bonds. This Cerastes vipera (Sahara sand viper) protein is Thrombin-like enzyme cerastobin.